Reading from the N-terminus, the 1290-residue chain is Alpha-amylase (1290 aa).

The first 31 residues, 1-31 (MTRKTRYLHQITTLILGGLLIVPAAAPPVSA), serve as a signal peptide directing secretion. Catalysis depends on Glu-231, which acts as the Nucleophile. Asp-373 functions as the Proton donor in the catalytic mechanism. The Fibronectin type-III domain occupies 817–902 (VPANLQATVM…AAATATTPAG (86 aa)). Positions 902–978 (GNHVTVYYKQ…SNGGSNYLFG (77 aa)) are CBM25. Low complexity-rich tracts occupy residues 994 to 1008 (APVAPSATPTVAPTA) and 1016 to 1031 (VTPTVTPITTPTVAPT). The segment at 994-1037 (APVAPSATPTVAPTATPTPKPSVTPTVTPITTPTVAPTLSPTPT) is disordered. A CBM25 region spans residues 1092 to 1171 (GNSATIYYKN…NGGSNYHFGT (80 aa)). In terms of domain architecture, CBM20 spans 1183 to 1289 (TGEPQADSVT…VTLTVQRWKD (107 aa)).

The protein belongs to the glycosyl hydrolase 119 (GH119) family.

The protein localises to the secreted. It catalyses the reaction Endohydrolysis of (1-&gt;4)-alpha-D-glucosidic linkages in polysaccharides containing three or more (1-&gt;4)-alpha-linked D-glucose units.. In terms of biological role, acts on maltooligosaccharides that have a degree of polymerization (DP) of 4 or more, amylose, and soluble or raw starch to produce glucose and maltooligosaccharides up to DP5 by a hydrolysis reaction. Also acts on maltooligosyl trehaloses that have DP5 or more to produce trehalose as the major hydrolysis product. The chain is Alpha-amylase from Niallia circulans (Bacillus circulans).